A 244-amino-acid polypeptide reads, in one-letter code: DNA repair protein RecO (244 aa).

Belongs to the RecO family.

In terms of biological role, involved in DNA repair and RecF pathway recombination. In Myxococcus xanthus (strain DK1622), this protein is DNA repair protein RecO.